Consider the following 309-residue polypeptide: Short-chain dehydrogenase/reductase ARMGADRAFT_1048226 (309 aa).

NADP(+)-binding residues include lysine 64, aspartate 86, asparagine 113, and lysine 145. Serine 167 acts as the Proton donor in catalysis. NADP(+)-binding residues include tyrosine 196 and lysine 200. Tyrosine 196 acts as the Proton acceptor in catalysis. Lysine 200 serves as the catalytic Lowers pKa of active site Tyr.

The protein belongs to the short-chain dehydrogenases/reductases (SDR) family.

The protein operates within secondary metabolite biosynthesis. Its function is as follows. Short-chain dehydrogenase/reductase, part of the gene cluster that mediates the biosynthesis of melleolides, a range of antifungal and phytotoxic polyketide derivatives composed of an orsellinic acid (OA) moiety esterified to various sesquiterpene alcohols. The first step in melleolides biosynthesis is performed by the delta(6)-protoilludene synthase PRO1 which catalyzes the cyclization of farnesyl diphosphate to protoilludene. The orsellinic acid synthase armB produces OA by condensing acetyl-CoA with 3 malonyl-CoA units in a three-round chain elongation reaction folowed by a C2-C7 ring closure. ArmB further catalyzes the trans-esterification of OA to the various sesquiterpene alcohols resulting from the hydroxylation of protoilludene. The melleolides cluster also includes 5 cytochrome P450 monooxygenases, 4 NAD(+)-dependent oxidoreductases, one flavin-dependent oxidoreductase, and one O-methyltransferase. The cytochrome P450 monooxygenases may be involved in protoilludene hydroxylation to elaborate melleolides with multiple alcohol groups, such as melleolide D, which carries alcohol functionalities at C-4, C-5, C-10, and C-13. The role of the NAD(+)-dependent enzymes remains unknown. Numerous melleolides, including arnamial, show 5'-O-methylation of the aromatic moiety which may be catalyzed by the methyltransferase encoded in the cluster. The flavin-dependent oxidoreductase might represent the dehydrogenase yielding the aldehyde in position 1 of arnamial and other melleolides. Finally, several halogenase localized outside of the cluster, are able to catalyze the transfer of a single chlorine atom to the melleolide backbone, resulting in a 6'-chloromelleolide product. The protein is Short-chain dehydrogenase/reductase ARMGADRAFT_1048226 of Armillaria gallica (Bulbous honey fungus).